Consider the following 422-residue polypeptide: Serine hydroxymethyltransferase (422 aa).

121-123 (GHI) serves as a coordination point for (6S)-5,6,7,8-tetrahydrofolate. K227 carries the N6-(pyridoxal phosphate)lysine modification. Position 245 (E245) interacts with (6S)-5,6,7,8-tetrahydrofolate.

Belongs to the SHMT family. In terms of assembly, homodimer. Pyridoxal 5'-phosphate is required as a cofactor.

It is found in the cytoplasm. It carries out the reaction 5,10-methylenetetrahydromethanopterin + glycine + H2O = 5,6,7,8-tetrahydromethanopterin + L-serine. The protein operates within amino-acid biosynthesis; glycine biosynthesis; glycine from L-serine: step 1/1. Its function is as follows. Catalyzes the reversible interconversion of serine and glycine with tetrahydromethanopterin (H4MPT) serving as the one-carbon carrier. Also exhibits a pteridine-independent aldolase activity toward beta-hydroxyamino acids, producing glycine and aldehydes, via a retro-aldol mechanism. This chain is Serine hydroxymethyltransferase, found in Methanobrevibacter smithii (strain ATCC 35061 / DSM 861 / OCM 144 / PS).